Here is a 234-residue protein sequence, read N- to C-terminus: 7-carboxy-7-deazaguanine synthase (234 aa).

Residues 36 to 38 and Arg51 contribute to the substrate site; that span reads IQG. The region spanning 42–234 is the Radical SAM core domain; it reads FVGYPSIFIR…LQTHKFLGIE (193 aa). 3 residues coordinate [4Fe-4S] cluster: Cys55, Cys59, and Cys62. Position 64 (Thr64) interacts with Mg(2+). Thr100 contributes to the substrate binding site. S-adenosyl-L-methionine is bound by residues Gly102, 144 to 146, and 195 to 198; these read SPK and QSMD.

This sequence belongs to the radical SAM superfamily. 7-carboxy-7-deazaguanine synthase family. As to quaternary structure, homodimer. [4Fe-4S] cluster serves as cofactor. It depends on S-adenosyl-L-methionine as a cofactor. Mg(2+) is required as a cofactor.

It catalyses the reaction 6-carboxy-5,6,7,8-tetrahydropterin + H(+) = 7-carboxy-7-deazaguanine + NH4(+). It participates in purine metabolism; 7-cyano-7-deazaguanine biosynthesis. Catalyzes the complex heterocyclic radical-mediated conversion of 6-carboxy-5,6,7,8-tetrahydropterin (CPH4) to 7-carboxy-7-deazaguanine (CDG), a step common to the biosynthetic pathways of all 7-deazapurine-containing compounds. This Rickettsia prowazekii (strain Madrid E) protein is 7-carboxy-7-deazaguanine synthase.